The following is a 140-amino-acid chain: Profilin-2 (140 aa).

Position 2 is an N-acetylalanine (Ala-2).

It belongs to the profilin family. In terms of assembly, occurs in many kinds of cells as a complex with monomeric actin in a 1:1 ratio. Interacts with PFN2. Interacts with ACTMAP (via N-terminus); the interaction may facilitate efficient cleavage of the acetylated N-terminus of immature actin by ACTMAP.

Its subcellular location is the cytoplasm. It is found in the cytoskeleton. Its function is as follows. Binds to actin and affects the structure of the cytoskeleton. At high concentrations, profilin prevents the polymerization of actin, whereas it enhances it at low concentrations. By binding to PIP2, it inhibits the formation of IP3 and DG. This Rattus norvegicus (Rat) protein is Profilin-2 (Pfn2).